Reading from the N-terminus, the 145-residue chain is Plastocyanin, chloroplastic (145 aa).

The N-terminal 48 residues, 1-48 (MASLMRKAAVAPAKATRTTVKASASLQRVAQAAGVAVAGFSLALSANA), are a transit peptide targeting the chloroplast. Residues 49 to 145 (ANVKLGADSG…AGMVGKVIVQ (97 aa)) enclose the Plastocyanin-like domain. Cu cation-binding residues include histidine 85, cysteine 130, histidine 133, and methionine 138.

The protein belongs to the plastocyanin family. Cu(2+) serves as cofactor.

Its subcellular location is the plastid. It is found in the chloroplast thylakoid membrane. In terms of biological role, participates in electron transfer between P700 and the cytochrome b6-f complex in photosystem I. This is Plastocyanin, chloroplastic (PETE) from Tetradesmus obliquus (Green alga).